A 706-amino-acid chain; its full sequence is Transcription factor 12 (706 aa).

The interval 25 to 109 is disordered; it reads AMFSPPVNSG…TPFMNSNLIG (85 aa). Polar residues-rich tracts occupy residues 30-48 and 56-76; these read PVNS…QFSG and GTTS…SRGF. A phosphoserine mark is found at Ser-47, Ser-67, and Ser-79. Positions 81-93 are enriched in basic and acidic residues; it reads HYSDHLNDSRLGT. Ser-98 bears the Phosphoserine mark. Residue Lys-110 forms a Glycyl lysine isopeptide (Lys-Gly) (interchain with G-Cter in SUMO2) linkage. Phosphoserine occurs at positions 116 and 124. The leucine-zipper stretch occupies residues 119-140; sequence LYSRDSGLSGCQSSLLRQDLGL. 2 disordered regions span residues 140-222 and 249-313; these read LGSP…SMFA and FGGI…ASHT. A compositionally biased stretch (polar residues) spans 144–163; it reads AQLSSSGKPGTPYYSFSATS. A Glycyl lysine isopeptide (Lys-Gly) (interchain with G-Cter in SUMO2) cross-link involves residue Lys-181. The Nuclear localization signal motif lies at 181-188; sequence KKVRKVPP. The span at 256–269 shows a compositional bias: low complexity; it reads STSHMSQSSSYGSL. A compositionally biased stretch (polar residues) spans 282-306; sequence VSPTDINTSLPPMSSFHRGSTSSSP. Phosphothreonine is present on Thr-313. A Phosphoserine modification is found at Ser-333. Disordered stretches follow at residues 349–392 and 520–604; these read PDHT…YENS and HKTP…ERRM. Over residues 352–363 the composition is skewed to low complexity; that stretch reads TSSSFPSNPSTP. 2 stretches are compositionally biased toward polar residues: residues 364–376 and 383–392; these read VGSP…TSQW and APSSPSYENS. The residue at position 392 (Ser-392) is a Phosphoserine. Basic and acidic residues-rich tracts occupy residues 542–554 and 560–575; these read IKTE…ENLH and DDMK…DIKV. Lys-543 participates in a covalent cross-link: Glycyl lysine isopeptide (Lys-Gly) (interchain with G-Cter in SUMO2). Ser-564 carries the phosphoserine modification. Lys-574 participates in a covalent cross-link: Glycyl lysine isopeptide (Lys-Gly) (interchain with G-Cter in SUMO2). Thr-581 bears the Phosphothreonine mark. Ser-582 and Ser-583 each carry phosphoserine. Basic and acidic residues predominate over residues 592–604; the sequence is PEQKIEREKERRM. A bHLH domain is found at 601–654; sequence ERRMANNARERLRVRDINEAFKELGRMCQLHLKSEKPQTKLLILHQAVAVILSL. Glycyl lysine isopeptide (Lys-Gly) (interchain with G-Cter in SUMO2) cross-links involve residues Lys-633 and Lys-677. Residues 656–679 form a class A specific domain region; that stretch reads QQVRERNLNPKAACLKRREEEKVS. Positions 674-706 are disordered; it reads EEEKVSAASAEPPNTLPGAHPGLSESTNPMGHL. Residues 697–706 are compositionally biased toward polar residues; that stretch reads SESTNPMGHL.

Efficient DNA binding requires dimerization with another bHLH protein. Forms homo- or heterooligomers with myogenin, E12 and ITF2 proteins and RUNX1T1. Interacts with PTF1A. Interacts with NEUROD2. Interacts with BHLHA9. As to expression, widely expressed.

The protein resides in the nucleus. Its function is as follows. Transcriptional regulator. Involved in the initiation of neuronal differentiation. Activates transcription by binding to the E box (5'-CANNTG-3'). May be involved in the functional network that regulates the development of the GnRH axis. The chain is Transcription factor 12 (Tcf12) from Mus musculus (Mouse).